A 598-amino-acid chain; its full sequence is DNA ligase (598 aa).

Aspartate 258 provides a ligand contact to ATP. Lysine 260 functions as the N6-AMP-lysine intermediate in the catalytic mechanism. Positions 265, 280, 310, 350, 427, and 433 each coordinate ATP.

Belongs to the ATP-dependent DNA ligase family. It depends on Mg(2+) as a cofactor.

It catalyses the reaction ATP + (deoxyribonucleotide)n-3'-hydroxyl + 5'-phospho-(deoxyribonucleotide)m = (deoxyribonucleotide)n+m + AMP + diphosphate.. DNA ligase that seals nicks in double-stranded DNA during DNA replication, DNA recombination and DNA repair. The protein is DNA ligase of Sulfolobus acidocaldarius (strain ATCC 33909 / DSM 639 / JCM 8929 / NBRC 15157 / NCIMB 11770).